Reading from the N-terminus, the 541-residue chain is Chaperonin GroEL 2 (541 aa).

ATP contacts are provided by residues 29-32 (TLGP), 86-90 (DGTTT), Gly-413, 478-480 (NAA), and Asp-494.

The protein belongs to the chaperonin (HSP60) family. As to quaternary structure, forms a cylinder of 14 subunits composed of two heptameric rings stacked back-to-back. Interacts with the co-chaperonin GroES.

It localises to the cytoplasm. It catalyses the reaction ATP + H2O + a folded polypeptide = ADP + phosphate + an unfolded polypeptide.. Its function is as follows. Together with its co-chaperonin GroES, plays an essential role in assisting protein folding. The GroEL-GroES system forms a nano-cage that allows encapsulation of the non-native substrate proteins and provides a physical environment optimized to promote and accelerate protein folding. The protein is Chaperonin GroEL 2 of Corynebacterium jeikeium (strain K411).